Reading from the N-terminus, the 122-residue chain is Small ribosomal subunit protein uS13 (122 aa).

A disordered region spans residues 98–122 (VRGQRTKTNARTRKGKRKTVGAKAK).

It belongs to the universal ribosomal protein uS13 family. In terms of assembly, part of the 30S ribosomal subunit. Forms a loose heterodimer with protein S19. Forms two bridges to the 50S subunit in the 70S ribosome.

Located at the top of the head of the 30S subunit, it contacts several helices of the 16S rRNA. In the 70S ribosome it contacts the 23S rRNA (bridge B1a) and protein L5 of the 50S subunit (bridge B1b), connecting the 2 subunits; these bridges are implicated in subunit movement. Contacts the tRNAs in the A and P-sites. The chain is Small ribosomal subunit protein uS13 from Nautilia profundicola (strain ATCC BAA-1463 / DSM 18972 / AmH).